A 250-amino-acid polypeptide reads, in one-letter code: 3-deoxy-manno-octulosonate cytidylyltransferase (250 aa).

Belongs to the KdsB family.

It is found in the cytoplasm. It carries out the reaction 3-deoxy-alpha-D-manno-oct-2-ulosonate + CTP = CMP-3-deoxy-beta-D-manno-octulosonate + diphosphate. It functions in the pathway nucleotide-sugar biosynthesis; CMP-3-deoxy-D-manno-octulosonate biosynthesis; CMP-3-deoxy-D-manno-octulosonate from 3-deoxy-D-manno-octulosonate and CTP: step 1/1. It participates in bacterial outer membrane biogenesis; lipopolysaccharide biosynthesis. Activates KDO (a required 8-carbon sugar) for incorporation into bacterial lipopolysaccharide in Gram-negative bacteria. The protein is 3-deoxy-manno-octulosonate cytidylyltransferase of Thioalkalivibrio sulfidiphilus (strain HL-EbGR7).